We begin with the raw amino-acid sequence, 62 residues long: Alpha-lytic protease L1 (62 aa).

The active-site Charge relay system is Ser-48.

This sequence belongs to the peptidase S1 family. Monomer.

It is found in the secreted. The catalysed reaction is Preferential cleavage: Ala-|-Xaa, Val-|-Xaa in bacterial cell walls, elastin and other proteins.. Inhibited by phenylmethanesulfonyl fluoride (PMSF) and p-chloromercuribenzoate (PCMB). Its function is as follows. Has bacteriolytic activity. In Lysobacter sp. (strain XL1), this protein is Alpha-lytic protease L1.